A 305-amino-acid polypeptide reads, in one-letter code: 2-aminophenol 1,6-dioxygenase beta subunit (305 aa).

Residues His-14, His-63, and His-196 each coordinate Fe cation.

Belongs to the LigB/MhpB extradiol dioxygenase family. In terms of assembly, heterotetramer of 2 alpha and 2 beta subunits. The cofactor is Fe(2+).

The catalysed reaction is 2-aminophenol + O2 = 2-aminomuconate 6-semialdehyde. With respect to regulation, strongly inhibited by CuSO(4), FeCl(3), K(3)[Fe(CN)(6)], AgNO3, HgCl(2) and MnCl(2). Functionally, component of the 2-aminophenol 1,6-dioxygenase complex that catalyzes the ring fission of 2-aminophenol to produce 2-aminomuconic 6-semialdehyde. AmnB seems to be the catalytic subunit of the complex. The enzyme is also active toward 2-amino-p-cresol, 6-amino-m-cresol, 2-amino-m-cresol, 2-amino-4,5-dimethylphenol, 2-amino-4-chlorophenol, and catechol. In Pseudomonas sp, this protein is 2-aminophenol 1,6-dioxygenase beta subunit (amnB).